A 215-amino-acid polypeptide reads, in one-letter code: Casparian strip membrane protein 3 (215 aa).

Positions methionine 1 to isoleucine 26 are disordered. The Cytoplasmic portion of the chain corresponds to methionine 1 to alanine 55. Residues isoleucine 56 to methionine 76 form a helical membrane-spanning segment. Over glycine 77–threonine 101 the chain is Extracellular. A helical transmembrane segment spans residues phenylalanine 102 to phenylalanine 122. Topologically, residues serine 123–arginine 136 are cytoplasmic. Residues leucine 137–alanine 157 traverse the membrane as a helical segment. Residues alanine 158–threonine 189 are Extracellular-facing. The helical transmembrane segment at alanine 190 to phenylalanine 210 threads the bilayer. The Cytoplasmic portion of the chain corresponds to alanine 211–asparagine 215.

Belongs to the Casparian strip membrane proteins (CASP) family. Homodimer and heterodimers.

It is found in the cell membrane. In terms of biological role, regulates membrane-cell wall junctions and localized cell wall deposition. Required for establishment of the Casparian strip membrane domain (CSD) and the subsequent formation of Casparian strips, a cell wall modification of the root endodermis that determines an apoplastic barrier between the intraorganismal apoplasm and the extraorganismal apoplasm and prevents lateral diffusion. In Ricinus communis (Castor bean), this protein is Casparian strip membrane protein 3.